The primary structure comprises 186 residues: ATP synthase subunit b (186 aa).

The chain crosses the membrane as a helical span at residues 28–48 (IVWSIIPFAVILFVFAKVVLP).

Belongs to the ATPase B chain family. F-type ATPases have 2 components, F(1) - the catalytic core - and F(0) - the membrane proton channel. F(1) has five subunits: alpha(3), beta(3), gamma(1), delta(1), epsilon(1). F(0) has three main subunits: a(1), b(2) and c(10-14). The alpha and beta chains form an alternating ring which encloses part of the gamma chain. F(1) is attached to F(0) by a central stalk formed by the gamma and epsilon chains, while a peripheral stalk is formed by the delta and b chains.

It is found in the cell membrane. F(1)F(0) ATP synthase produces ATP from ADP in the presence of a proton or sodium gradient. F-type ATPases consist of two structural domains, F(1) containing the extramembraneous catalytic core and F(0) containing the membrane proton channel, linked together by a central stalk and a peripheral stalk. During catalysis, ATP synthesis in the catalytic domain of F(1) is coupled via a rotary mechanism of the central stalk subunits to proton translocation. In terms of biological role, component of the F(0) channel, it forms part of the peripheral stalk, linking F(1) to F(0). The chain is ATP synthase subunit b from Corynebacterium urealyticum (strain ATCC 43042 / DSM 7109).